The primary structure comprises 88 residues: Large ribosomal subunit protein bL27 (88 aa).

This sequence belongs to the bacterial ribosomal protein bL27 family.

This is Large ribosomal subunit protein bL27 from Mycolicibacterium smegmatis (strain ATCC 700084 / mc(2)155) (Mycobacterium smegmatis).